The sequence spans 257 residues: MISRKSVITFGMVAIPIGMYTTTTDNDIRFNQLHKEDNSRIRYKKTCAHCGKEVKTEDIVKGYEYDDDKYVVITDEEIEKIKTEKEKSIQILHFAQLNQISPVYYEKTYQAVPETGGEKAFELLRSALMAEQKIAIGKTVMGTKDTLMAIIPREDGILISTMFYADDIKAIQKQYTKPEVNEQEFNMAKLLINSMDTPFDPSKYKDEYQERLRSLIETKISGKEIVAAEPESAGKVIDLMEALKASVEKAQKDKETA.

A Ku domain is found at 9–184; it reads TFGMVAIPIG…YTKPEVNEQE (176 aa).

It belongs to the prokaryotic Ku family. As to quaternary structure, homodimer. Interacts with LigD.

Functionally, with LigD forms a non-homologous end joining (NHEJ) DNA repair enzyme, which repairs dsDNA breaks with reduced fidelity. Binds linear dsDNA with 5'- and 3'- overhangs but not closed circular dsDNA nor ssDNA. Recruits and stimulates the ligase activity of LigD. This chain is Non-homologous end joining protein Ku, found in Lachnoclostridium phytofermentans (strain ATCC 700394 / DSM 18823 / ISDg) (Clostridium phytofermentans).